The primary structure comprises 399 residues: uncharacterized protein (399 aa).

The segment covering 197–206 (ENSSASSVTS) has biased composition (polar residues). Residues 197-224 (ENSSASSVTSEECEQDVMDEQSAEDNEE) are disordered. A compositionally biased stretch (acidic residues) spans 207-224 (EECEQDVMDEQSAEDNEE).

This is an uncharacterized protein from Diadromus pulchellus (Parasitic wasp).